The sequence spans 243 residues: NAD-dependent protein deacetylase (243 aa).

Residues 1–243 (MKHDLETLKH…VSVVKSLMTE (243 aa)) enclose the Deacetylase sirtuin-type domain. NAD(+)-binding residues include A24, F35, R36, Q105, I107, D108, and H123. Position 35 (F35) interacts with nicotinamide. Nicotinamide contacts are provided by I107 and D108. The active-site Proton acceptor is the H123. Residues C131, C134, C151, and C154 each contribute to the Zn(2+) site. S192, S193, N215, and D232 together coordinate NAD(+).

It belongs to the sirtuin family. Class U subfamily. The cofactor is Zn(2+).

Its subcellular location is the cytoplasm. The enzyme catalyses N(6)-acetyl-L-lysyl-[protein] + NAD(+) + H2O = 2''-O-acetyl-ADP-D-ribose + nicotinamide + L-lysyl-[protein]. NAD-dependent protein deacetylase which modulates the activities of several enzymes which are inactive in their acetylated form. This chain is NAD-dependent protein deacetylase, found in Staphylococcus aureus (strain COL).